A 776-amino-acid chain; its full sequence is Structure-specific endonuclease subunit SLX4 (776 aa).

Residues 201 to 217 show a composition bias toward acidic residues; sequence EEQMVSDDNSSTEDDTD. Disordered regions lie at residues 201-223, 263-283, and 507-531; these read EEQMVSDDNSSTEDDTDPTQNDG, KSLQRHSQKDSDNGNTIPDQN, and PPLDACSDSGPTGVVSSMPYKKPHS.

The protein belongs to the SLX4 family. In terms of assembly, forms a heterodimer with SLX1. Phosphorylated in response to DNA damage.

It localises to the nucleus. Functionally, regulatory subunit of the SLX1-SLX4 structure-specific endonuclease that resolves DNA secondary structures generated during DNA repair and recombination. Has endonuclease activity towards branched DNA substrates, introducing single-strand cuts in duplex DNA close to junctions with ss-DNA. The sequence is that of Structure-specific endonuclease subunit SLX4 from Candida albicans (strain SC5314 / ATCC MYA-2876) (Yeast).